We begin with the raw amino-acid sequence, 257 residues long: Zinc import ATP-binding protein ZnuC (257 aa).

The 216-residue stretch at Ile-5–His-220 folds into the ABC transporter domain. Position 37 to 44 (Gly-37 to Ser-44) interacts with ATP.

Belongs to the ABC transporter superfamily. Zinc importer (TC 3.A.1.15.5) family. The complex is composed of two ATP-binding proteins (ZnuC), two transmembrane proteins (ZnuB) and a solute-binding protein (ZnuA).

It localises to the cell inner membrane. The enzyme catalyses Zn(2+)(out) + ATP(in) + H2O(in) = Zn(2+)(in) + ADP(in) + phosphate(in) + H(+)(in). Functionally, part of the ABC transporter complex ZnuABC involved in zinc import. Responsible for energy coupling to the transport system. In Photorhabdus laumondii subsp. laumondii (strain DSM 15139 / CIP 105565 / TT01) (Photorhabdus luminescens subsp. laumondii), this protein is Zinc import ATP-binding protein ZnuC.